The chain runs to 157 residues: 2-C-methyl-D-erythritol 2,4-cyclodiphosphate synthase (157 aa).

The a divalent metal cation site is built by D9 and H11. Residues 9–11 (DVH) and 35–36 (HS) each bind 4-CDP-2-C-methyl-D-erythritol 2-phosphate. H43 is a binding site for a divalent metal cation. Residues 57 to 59 (DIG), 62 to 66 (FPDTD), 101 to 107 (AEKPKMA), 133 to 136 (TTTE), F140, and R143 contribute to the 4-CDP-2-C-methyl-D-erythritol 2-phosphate site.

Belongs to the IspF family. Homotrimer. A divalent metal cation is required as a cofactor.

The enzyme catalyses 4-CDP-2-C-methyl-D-erythritol 2-phosphate = 2-C-methyl-D-erythritol 2,4-cyclic diphosphate + CMP. It functions in the pathway isoprenoid biosynthesis; isopentenyl diphosphate biosynthesis via DXP pathway; isopentenyl diphosphate from 1-deoxy-D-xylulose 5-phosphate: step 4/6. In terms of biological role, involved in the biosynthesis of isopentenyl diphosphate (IPP) and dimethylallyl diphosphate (DMAPP), two major building blocks of isoprenoid compounds. Catalyzes the conversion of 4-diphosphocytidyl-2-C-methyl-D-erythritol 2-phosphate (CDP-ME2P) to 2-C-methyl-D-erythritol 2,4-cyclodiphosphate (ME-CPP) with a corresponding release of cytidine 5-monophosphate (CMP). This is 2-C-methyl-D-erythritol 2,4-cyclodiphosphate synthase from Listeria innocua serovar 6a (strain ATCC BAA-680 / CLIP 11262).